Reading from the N-terminus, the 883-residue chain is Probable valine--tRNA ligase, cytoplasmic (883 aa).

The segment covering 1–23 has biased composition (basic and acidic residues); that stretch reads MTLKMDRKALKEEKKKQKLEKFL. Residues 1–49 are disordered; that stretch reads MTLKMDRKALKEEKKKQKLEKFLNKKTTQSKISKAPKPAKNKSSSGYDP. Residues 30–45 are compositionally biased toward low complexity; it reads SKISKAPKPAKNKSSS. The short motif at 82–92 is the 'HIGH' region element; sequence PNITGSLHIGH. The short motif at 586 to 590 is the 'KMSKS' region element; sequence KMSKS. K589 lines the ATP pocket.

This sequence belongs to the class-I aminoacyl-tRNA synthetase family.

The protein localises to the cytoplasm. The catalysed reaction is tRNA(Val) + L-valine + ATP = L-valyl-tRNA(Val) + AMP + diphosphate. The chain is Probable valine--tRNA ligase, cytoplasmic from Vairimorpha ceranae (strain BRL01) (Microsporidian parasite).